The chain runs to 217 residues: Variable small protein 22 (217 aa).

The first 18 residues, 1–18 (MRKRISAIIMTLFMVFMS), serve as a signal peptide directing secretion. Residue cysteine 19 is the site of N-palmitoyl cysteine attachment. Cysteine 19 is lipidated: S-diacylglycerol cysteine. Residues 151 to 174 (LGKNDASDDDTKKAIKKDNSDKTK) are disordered. The segment covering 155-174 (DASDDDTKKAIKKDNSDKTK) has biased composition (basic and acidic residues).

This sequence belongs to the variable small protein (Vsp) family.

The protein localises to the cell outer membrane. Functionally, the Vlp and Vsp proteins are antigenically distinct proteins, only one vlp or vsp gene is transcriptionally active at any one time. Switching between these genes is a mechanism of host immune response evasion. This Borrelia hermsii protein is Variable small protein 22.